Consider the following 422-residue polypeptide: Phosphoserine aminotransferase 2, chloroplastic (422 aa).

A chloroplast-targeting transit peptide spans 1–50 (MAASTNSFLIGNQTQIPSLKPKSISQSFIHFTKPNTINLTTRTKSVSIRC). Alanine 51 bears the N-acetylalanine mark. Arginine 101 provides a ligand contact to L-glutamate. Residues 135–136 (AT), tryptophan 161, threonine 211, aspartate 233, and glutamine 256 each bind pyridoxal 5'-phosphate. Lysine 257 carries the post-translational modification N6-(pyridoxal phosphate)lysine. A pyridoxal 5'-phosphate-binding site is contributed by 298-299 (NT).

This sequence belongs to the class-V pyridoxal-phosphate-dependent aminotransferase family. SerC subfamily. It depends on pyridoxal 5'-phosphate as a cofactor.

The protein resides in the plastid. It is found in the chloroplast. It catalyses the reaction O-phospho-L-serine + 2-oxoglutarate = 3-phosphooxypyruvate + L-glutamate. The enzyme catalyses 4-(phosphooxy)-L-threonine + 2-oxoglutarate = (R)-3-hydroxy-2-oxo-4-phosphooxybutanoate + L-glutamate. It functions in the pathway amino-acid biosynthesis; L-serine biosynthesis; L-serine from 3-phospho-D-glycerate: step 2/3. Its function is as follows. Involved in the plastidial phosphorylated pathway of serine biosynthesis (PPSB). Catalyzes the reversible conversion of 3-phosphohydroxypyruvate to phosphoserine. The polypeptide is Phosphoserine aminotransferase 2, chloroplastic (PSAT2) (Arabidopsis thaliana (Mouse-ear cress)).